A 181-amino-acid chain; its full sequence is Ribosome maturation factor RimM (181 aa).

Residues 99–172 (EDEFYQVDLI…FLIVDPMAAG (74 aa)) form the PRC barrel domain.

This sequence belongs to the RimM family. In terms of assembly, binds ribosomal protein uS19.

The protein localises to the cytoplasm. Its function is as follows. An accessory protein needed during the final step in the assembly of 30S ribosomal subunit, possibly for assembly of the head region. Essential for efficient processing of 16S rRNA. May be needed both before and after RbfA during the maturation of 16S rRNA. It has affinity for free ribosomal 30S subunits but not for 70S ribosomes. This Bartonella tribocorum (strain CIP 105476 / IBS 506) protein is Ribosome maturation factor RimM.